Consider the following 515-residue polypeptide: Cytochrome P450 705A22 (515 aa).

A helical transmembrane segment spans residues 9–29; it reads FQNCFIFILIFLLTFLCFFFF. Cys454 contributes to the heme binding site.

It belongs to the cytochrome P450 family. The cofactor is heme.

The protein resides in the membrane. Plays a role in the gravitropic response of the inflorescence stems and roots. May affect the synthesis of flavonols that have a role in regulating auxin transport. This Arabidopsis thaliana (Mouse-ear cress) protein is Cytochrome P450 705A22.